The following is a 424-amino-acid chain: Tol-Pal system protein TolB (424 aa).

The N-terminal stretch at 1 to 16 is a signal peptide; the sequence is MKQLLVLILSLYTTLA.

This sequence belongs to the TolB family. As to quaternary structure, the Tol-Pal system is composed of five core proteins: the inner membrane proteins TolA, TolQ and TolR, the periplasmic protein TolB and the outer membrane protein Pal. They form a network linking the inner and outer membranes and the peptidoglycan layer.

It is found in the periplasm. Its function is as follows. Part of the Tol-Pal system, which plays a role in outer membrane invagination during cell division and is important for maintaining outer membrane integrity. The polypeptide is Tol-Pal system protein TolB (Ruthia magnifica subsp. Calyptogena magnifica).